The sequence spans 964 residues: A-type ATP synthase subunit A (964 aa).

Residues 392 to 518 form the DOD-type homing endonuclease domain; that stretch reads FLGYLMANGT…LSYLFAKLGI (127 aa).

Belongs to the ATPase alpha/beta chains family. As to quaternary structure, has multiple subunits with at least A(3), B(3), C, D, E, F, H, I and proteolipid K(x). In terms of processing, this protein undergoes a protein self splicing that involves a post-translational excision of the VDE intervening region (intein) followed by peptide ligation.

The protein localises to the cell membrane. The enzyme catalyses ATP + H2O + 4 H(+)(in) = ADP + phosphate + 5 H(+)(out). Its function is as follows. Component of the A-type ATP synthase that produces ATP from ADP in the presence of a proton gradient across the membrane. The A chain is the catalytic subunit. This chain is A-type ATP synthase subunit A, found in Pyrococcus horikoshii (strain ATCC 700860 / DSM 12428 / JCM 9974 / NBRC 100139 / OT-3).